The sequence spans 325 residues: tRNA U34 carboxymethyltransferase (325 aa).

Residues Lys91, Trp105, Lys110, Gly130, 152 to 154 (DPS), 181 to 182 (ME), Met197, Tyr201, and Arg316 each bind carboxy-S-adenosyl-L-methionine.

The protein belongs to the class I-like SAM-binding methyltransferase superfamily. CmoB family. Homotetramer.

It carries out the reaction carboxy-S-adenosyl-L-methionine + 5-hydroxyuridine(34) in tRNA = 5-carboxymethoxyuridine(34) in tRNA + S-adenosyl-L-homocysteine + H(+). In terms of biological role, catalyzes carboxymethyl transfer from carboxy-S-adenosyl-L-methionine (Cx-SAM) to 5-hydroxyuridine (ho5U) to form 5-carboxymethoxyuridine (cmo5U) at position 34 in tRNAs. This chain is tRNA U34 carboxymethyltransferase, found in Saccharophagus degradans (strain 2-40 / ATCC 43961 / DSM 17024).